We begin with the raw amino-acid sequence, 418 residues long: Tektin-1 (418 aa).

Coiled-coil stretches lie at residues 21–107, 134–177, 266–308, and 333–384; these read KNQY…TLKE, HELI…DLKD, NGLK…DQEG, and AQYR…NTIY.

It belongs to the tektin family. In terms of assembly, microtubule inner protein component of sperm flagellar doublet microtubules. In terms of processing, ubiquitinated, leading to its degradation. Deubiquitinated by USP16, promoting its stability. Predominantly expressed in testis. Expressed in airway epithelial cells.

It localises to the cytoplasm. It is found in the cytoskeleton. The protein localises to the cilium axoneme. The protein resides in the flagellum axoneme. Microtubule inner protein (MIP) part of the dynein-decorated doublet microtubules (DMTs) in cilia and flagellar axoneme. Forms filamentous polymers in the walls of ciliary and flagellar microtubules. The polypeptide is Tektin-1 (TEKT1) (Homo sapiens (Human)).